A 566-amino-acid polypeptide reads, in one-letter code: NAD-dependent malic enzyme (566 aa).

Catalysis depends on Tyr-104, which acts as the Proton donor. Residue Arg-157 participates in NAD(+) binding. The active-site Proton acceptor is the Lys-175. A divalent metal cation is bound by residues Glu-246, Asp-247, and Asp-270. NAD(+)-binding residues include Asp-270 and Asn-419.

This sequence belongs to the malic enzymes family. As to quaternary structure, homotetramer. Mg(2+) serves as cofactor. It depends on Mn(2+) as a cofactor.

It catalyses the reaction (S)-malate + NAD(+) = pyruvate + CO2 + NADH. The catalysed reaction is oxaloacetate + H(+) = pyruvate + CO2. The sequence is that of NAD-dependent malic enzyme from Cronobacter sakazakii (strain ATCC BAA-894) (Enterobacter sakazakii).